The following is a 100-amino-acid chain: uncharacterized protein (100 aa).

A run of 3 helical transmembrane segments spans residues 9–29 (VYTYILSAVIYSQDLFPSWVV), 41–61 (PYLIHGNSFLFQILQVLITAP), and 72–92 (SIPFIFLALLLSQDFHVFLGI).

The protein localises to the membrane. This is an uncharacterized protein from Saccharomyces cerevisiae (strain ATCC 204508 / S288c) (Baker's yeast).